Reading from the N-terminus, the 142-residue chain is Semaphorin-like protein VACWR164 (142 aa).

Positions 1–142 (MNTIKQSFST…MPQMKKILKM (142 aa)) constitute a Sema domain.

Belongs to the semaphorin family.

In Bos taurus (Bovine), this protein is Semaphorin-like protein VACWR164.